The primary structure comprises 687 residues: Protein white (687 aa).

The disordered stretch occupies residues 1 to 30 (MGQEDQELLIRGGSKHPSAEHLNNGDSGAA). At 1 to 419 (MGQEDQELLI…FMQFRAVLWR (419 aa)) the chain is on the cytoplasmic side. Positions 93–341 (NRTRGLFCNE…FSYVGAQCPT (249 aa)) constitute an ABC transporter domain. Residue 130–137 (GSSGAGKT) participates in ATP binding. The helical transmembrane segment at 420-440 (SWLSVLKEPLLVKVRLIQTTM) threads the bilayer. The Extracellular segment spans residues 441–460 (VAILIGLIFLGQQLTQVGVM). The helical transmembrane segment at 461 to 481 (NINGAIFLFLTNMTFQNVFAT) threads the bilayer. Residues 482–497 (INVFTSELPVFMREAR) are Cytoplasmic-facing. Residues 498-518 (SRLYRCDTYFLGKTIAELPLF) traverse the membrane as a helical segment. The Extracellular segment spans residues 519–531 (LTVPLVFTAIAYP). Residues 532-552 (MIGLRAGVLHFFNCLALVTLV) traverse the membrane as a helical segment. Residues 553–568 (ANVSTSFGYLISCASS) lie on the Cytoplasmic side of the membrane. Residues 569–589 (STSMALSVGPPVIIPFLLFGG) traverse the membrane as a helical segment. At 590–644 (FFLNSGSVPVYLKWLSYLSWFRYANEGLLINQWADVEPGEISCTSSNTTCPSSGK) the chain is on the extracellular side. N-linked (GlcNAc...) asparagine glycosylation is present at Asn636. The chain crosses the membrane as a helical span at residues 645-665 (VILETLNFSAADLPLDYVGLA). At 666–675 (ILIVSFRVLA) the chain is on the cytoplasmic side.

This sequence belongs to the ABC transporter superfamily. ABCG family. Eye pigment precursor importer (TC 3.A.1.204) subfamily. May form a heterodimer with bw/brown. May form a heterodimer with st/scarlet. As to expression, expressed in the head (at protein level). Expressed in the eye, specifically in retina primary pigment cells, in the basement membrane of the base of secondary and tertiary pigment cells, and in retinula cells (at protein level). Expressed in the retina underlying lamina in the epithelial glia that surrounds the array of lamina cartridges (at protein level). Weakly expressed in photoreceptors, specifically in terminals of R1-R6, R7 and R8 (at protein level). Expressed at very low levels in medulla and central brain (at protein level). Expressed in principal cells of the Malpighian tubules.

Its subcellular location is the cytoplasmic vesicle membrane. It carries out the reaction 3',5'-cyclic GMP(in) + ATP + H2O = 3',5'-cyclic GMP(out) + ADP + phosphate + H(+). The catalysed reaction is guanine(out) + ATP + H2O = guanine(in) + ADP + phosphate + H(+). The enzyme catalyses riboflavin(in) + ATP + H2O = riboflavin(out) + ADP + phosphate + H(+). It catalyses the reaction (6S)-5,6,7,8-tetrahydrofolate(out) + ATP + H2O = (6S)-5,6,7,8-tetrahydrofolate(in) + ADP + phosphate + H(+). It carries out the reaction L-tryptophan(out) + ATP + H2O = L-tryptophan(in) + ADP + phosphate + H(+). The catalysed reaction is L-kynurenine(out) + ATP + H2O = L-kynurenine(in) + ADP + phosphate + H(+). The enzyme catalyses xanthine(out) + ATP + H2O = xanthine(in) + ADP + phosphate + H(+). ATP-dependent transporter of the ATP-binding cassette (ABC) family which transports various molecules including bioamines, neurotransmitters, metabolic intermediates and second messengers. In the eye, required for the transport of the eye red and brown pigment precursors, guanine and tryptophan, into pigment cell granules. Probably in association with bw/brown, involved in the transport of guanine. Probably in association with st/scarlet involved in the transport of kynurenine and probably tryptophan. Involved in the transport of kynurenine in pupal eyes. May play a role in histamine uptake by the lamina epithelial glia which surrounds photoreceptors R1-R6. In Malpighian tubules, involved in the transport of cGMP, guanine, xanthine, riboflavin, kynurenine and tryptophan. Probably in association with br/brown, involved in aging-induced intestinal stem cell proliferation in the midgut by regulating tetrahydrofolate transport. Probably in association with st/scarlet, plays a role in zinc storage granule biogenesis in Malpighian tubule principal epithelial cells. The polypeptide is Protein white (Drosophila melanogaster (Fruit fly)).